A 195-amino-acid chain; its full sequence is O-methyltransferase (195 aa).

This sequence belongs to the methyltransferase superfamily.

It functions in the pathway secondary metabolite biosynthesis. Its function is as follows. O-methyltransferase; part of the gene cluster that mediates the biosynthesis of pyrophen and campyrone B, which represent a class of fungal amino acid-derived alpha-pyrone natural products. The first step of pyrophen biosynthesis is catalyzed by the PKS-NRPS hybrid synthetase ATPKS that uptakes and condensates L-phenylalanine and malonyl-CoA in order to produce desmethyldesacetylpyrophen. Although the A domain does not discriminate between 2 enantiomeric phenylalanines, the downstream KS domain must play a gate keeping role to stereoselectively accept the L-phenylalanyl-S-phosphopantetheine (Ppant)-T domain intermediate for chain elongation. The resulting amino acid derived diketide is off-loaded through lactonization to yield the alpha-pyrone intermediate desmethyldesacetylpyrophen. The cluster-specific O-methyltransferase (OMT) then methylates desmethyldesacetylpyrophen to desacetylpyrophen, which is further acetylated to pyrophen by an endogenous yet unidentified N-acetyltransferase. ATPKS has relaxed substrate specificity to activate and extend branched-chain amino acid L-leucine to produce small amounts of campyrone B. This chain is O-methyltransferase, found in Aspergillus niger (strain ATCC 1015 / CBS 113.46 / FGSC A1144 / LSHB Ac4 / NCTC 3858a / NRRL 328 / USDA 3528.7).